The primary structure comprises 718 residues: MARAGGGGAAAPERAGGAARPEPWELSLEEVLKVYEQPINEEQAWAVCFQGCRGLRGEPGGVRRIRDTADILLRRDGSVGARLEPEPTTMVVPPASSEAQMVQSLGFAIYRALDWGLDENEERELSPQLERLIDLMANSDCEDSSCGAADEGYVGPEEEEEAEGGPRAVRTFAQAMRLCALRLTDPHGAQAHYQAVCRALFVETLELRAFLARVREAKEMLKKLGEEEPREKPLAELDHLGHTDWARLWVQLMRELRHGVKLKKVQEKEFNPLPTEFQLTPFEMLMQDIRARNYKLRKVMVDGDIPPRVKKDAHELILDFIRSRPPLKQVSERQLRPVPQKQRTLHEKILEEIKQERRLRPVGAQHLGGRGFGSLPCILNACSGDIKSTSCINLSVTDTGSGSQRPRPRVLLKAPTLAEMEEMNTSEEEESPCGEVALKRDRSFSEHDLAQLRSEMASGLQSAAQPPGGTEPPRARAGSMHSWRPSSRDQGFCPVSGQSQPLPSSALPSSLSSVDGPEAASPDTRHLWLEFSHPVESLALTVEEVVDVRRVLVKAEMERFLQDKELFSSLKRGKICCCCRAKFPLFSWPPTCLFCKRAVCTSCSVKMKMPSKKYGHIPVYTLGFESLQRVPTTKATPTLRRDAFQSLQGPKWRSVEEEFPHIYAHGCVLKDVCSDCTSFVADVVCSSRKSVDVLNATPRRSRQTQSLYIPNTRTLNFQ.

2 disordered regions span residues 1-22 and 143-166; these read MARA…ARPE and DSSC…EGGP. A compositionally biased stretch (low complexity) spans 10-21; it reads AAPERAGGAARP. A KIND domain is found at 26–207; the sequence is LSLEEVLKVY…RALFVETLEL (182 aa). 3 WH2 domains span residues 251–265, 281–299, and 345–362; these read QLMR…LKKV, PFEM…LRKV, and LHEK…LRPV. Position 374 is a phosphoserine (serine 374). Residues 397 to 434 are disordered; it reads TDTGSGSQRPRPRVLLKAPTLAEMEEMNTSEEEESPCG. Over residues 419 to 432 the composition is skewed to acidic residues; the sequence is EMEEMNTSEEEESP. 3 positions are modified to phosphoserine: serine 443, serine 445, and serine 479. A disordered region spans residues 456-518; that stretch reads MASGLQSAAQ…SSLSSVDGPE (63 aa). The segment covering 496-513 has biased composition (low complexity); it reads SGQSQPLPSSALPSSLSS. Residues 538–558 form a spir-box region; that stretch reads LALTVEEVVDVRRVLVKAEME.

The protein belongs to the spire family. Detected in oocytes.

The protein localises to the cytoplasm. The protein resides in the cytoskeleton. It is found in the cytosol. It localises to the cell membrane. Its subcellular location is the cytoplasmic vesicle membrane. Functionally, acts as an actin nucleation factor, remains associated with the slow-growing pointed end of the new filament. Involved in intracellular vesicle transport along actin fibers, providing a novel link between actin cytoskeleton dynamics and intracellular transport. Required for asymmetric spindle positioning and asymmetric cell division during oocyte meiosis. Required for normal formation of the cleavage furrow and for polar body extrusion during female germ cell meiosis. Also acts in the nucleus: together with SPIRE1 and SPIRE2, promotes assembly of nuclear actin filaments in response to DNA damage in order to facilitate movement of chromatin and repair factors after DNA damage. This chain is Protein spire homolog 2 (Spire2), found in Mus musculus (Mouse).